The following is a 393-amino-acid chain: tRNA(Met) cytidine acetate ligase (393 aa).

Positions 81, 142, and 167 each coordinate ATP.

It belongs to the TmcAL family.

The protein resides in the cytoplasm. It carries out the reaction cytidine(34) in elongator tRNA(Met) + acetate + ATP = N(4)-acetylcytidine(34) in elongator tRNA(Met) + AMP + diphosphate. In terms of biological role, catalyzes the formation of N(4)-acetylcytidine (ac(4)C) at the wobble position of elongator tRNA(Met), using acetate and ATP as substrates. First activates an acetate ion to form acetyladenylate (Ac-AMP) and then transfers the acetyl group to tRNA to form ac(4)C34. This chain is tRNA(Met) cytidine acetate ligase, found in Bacillus cytotoxicus (strain DSM 22905 / CIP 110041 / 391-98 / NVH 391-98).